The sequence spans 161 residues: Phosphopantetheine adenylyltransferase (161 aa).

Serine 11 serves as a coordination point for substrate. Residues serine 11–phenylalanine 12 and histidine 19 each bind ATP. Residues lysine 43, leucine 75, and arginine 89 each contribute to the substrate site. ATP-binding positions include glycine 90–arginine 92, glutamate 100, and tyrosine 125–serine 131.

This sequence belongs to the bacterial CoaD family. As to quaternary structure, homohexamer. Mg(2+) is required as a cofactor.

The protein localises to the cytoplasm. The catalysed reaction is (R)-4'-phosphopantetheine + ATP + H(+) = 3'-dephospho-CoA + diphosphate. Its pathway is cofactor biosynthesis; coenzyme A biosynthesis; CoA from (R)-pantothenate: step 4/5. In terms of biological role, reversibly transfers an adenylyl group from ATP to 4'-phosphopantetheine, yielding dephospho-CoA (dPCoA) and pyrophosphate. This is Phosphopantetheine adenylyltransferase from Staphylococcus haemolyticus (strain JCSC1435).